The chain runs to 86 residues: Small ribosomal subunit protein bS20 (86 aa).

This sequence belongs to the bacterial ribosomal protein bS20 family.

In terms of biological role, binds directly to 16S ribosomal RNA. The protein is Small ribosomal subunit protein bS20 of Exiguobacterium sibiricum (strain DSM 17290 / CCUG 55495 / CIP 109462 / JCM 13490 / 255-15).